Here is a 637-residue protein sequence, read N- to C-terminus: Threonine--tRNA ligase (637 aa).

A TGS domain is found at 1–61 (MVTVTLPDGS…DADAQLAIVT (61 aa)). Residues 244–535 (DHRRLAKQLD…LIEHHAGNFP (292 aa)) are catalytic. Zn(2+)-binding residues include Cys-335, His-386, and His-512.

This sequence belongs to the class-II aminoacyl-tRNA synthetase family. Homodimer. Zn(2+) serves as cofactor.

It localises to the cytoplasm. It carries out the reaction tRNA(Thr) + L-threonine + ATP = L-threonyl-tRNA(Thr) + AMP + diphosphate + H(+). Functionally, catalyzes the attachment of threonine to tRNA(Thr) in a two-step reaction: L-threonine is first activated by ATP to form Thr-AMP and then transferred to the acceptor end of tRNA(Thr). Also edits incorrectly charged L-seryl-tRNA(Thr). The sequence is that of Threonine--tRNA ligase from Thiobacillus denitrificans (strain ATCC 25259 / T1).